Here is a 61-residue protein sequence, read N- to C-terminus: Small ribosomal subunit protein uS14 (61 aa).

Zn(2+) is bound by residues cysteine 24, cysteine 27, cysteine 40, and cysteine 43.

The protein belongs to the universal ribosomal protein uS14 family. Zinc-binding uS14 subfamily. Part of the 30S ribosomal subunit. Contacts proteins S3 and S10. Zn(2+) serves as cofactor.

Functionally, binds 16S rRNA, required for the assembly of 30S particles and may also be responsible for determining the conformation of the 16S rRNA at the A site. This Syntrophotalea carbinolica (strain DSM 2380 / NBRC 103641 / GraBd1) (Pelobacter carbinolicus) protein is Small ribosomal subunit protein uS14.